An 85-amino-acid chain; its full sequence is UPF0297 protein LBUL_1485 (85 aa).

The protein belongs to the UPF0297 family.

The chain is UPF0297 protein LBUL_1485 from Lactobacillus delbrueckii subsp. bulgaricus (strain ATCC BAA-365 / Lb-18).